The following is a 240-amino-acid chain: MGKRLQSQNRGKGTPRYTSPTHKRKGAVKYRKFDESERKDKIIGTIIDILHDPGRSSPIARVRYDNGEERLILIPEGMKIKDTIECGISAEIKPGNVLPLGEVPEGIPVYNIETIPGDGGKLVRSGGCYAHVITHDVSKTIIKLPSGHMKTLNPMCRATIGVVAGGGRKEKPITKAGKKYHAMKAKAVLWPRVRGVAMNAVDHPFGGGNTQHAGKPTTISRHTSPGRKVGHIAARRTGKR.

Residues 1 to 20 are compositionally biased toward polar residues; that stretch reads MGKRLQSQNRGKGTPRYTSP. Disordered stretches follow at residues 1-33 and 204-240; these read MGKR…YRKF and PFGG…TGKR. Composition is skewed to basic residues over residues 21–30 and 224–240; these read THKRKGAVKY and SPGR…TGKR.

It belongs to the universal ribosomal protein uL2 family. Part of the 50S ribosomal subunit. Forms a bridge to the 30S subunit in the 70S ribosome.

Functionally, one of the primary rRNA binding proteins. Required for association of the 30S and 50S subunits to form the 70S ribosome, for tRNA binding and peptide bond formation. It has been suggested to have peptidyltransferase activity; this is somewhat controversial. Makes several contacts with the 16S rRNA in the 70S ribosome. The chain is Large ribosomal subunit protein uL2 from Methanococcus aeolicus (strain ATCC BAA-1280 / DSM 17508 / OCM 812 / Nankai-3).